A 256-amino-acid chain; its full sequence is Probable ABC transporter ATP-binding protein spyM18_0273 (256 aa).

In terms of domain architecture, ABC transporter spans 4-246 (LEINNLHVSI…EKEGYAGIAQ (243 aa)). 36 to 43 (GPNGTGKS) serves as a coordination point for ATP.

This sequence belongs to the ABC transporter superfamily. Ycf16 family.

The protein localises to the cell membrane. The chain is Probable ABC transporter ATP-binding protein spyM18_0273 from Streptococcus pyogenes serotype M18 (strain MGAS8232).